A 215-amino-acid polypeptide reads, in one-letter code: LexA repressor (215 aa).

A DNA-binding region (H-T-H motif) is located at residues 28–48 (RAEIAAELGFSSPNAAEEHLR). Catalysis depends on for autocatalytic cleavage activity residues S133 and K170.

Belongs to the peptidase S24 family. As to quaternary structure, homodimer.

The enzyme catalyses Hydrolysis of Ala-|-Gly bond in repressor LexA.. Functionally, represses a number of genes involved in the response to DNA damage (SOS response), including recA and lexA. In the presence of single-stranded DNA, RecA interacts with LexA causing an autocatalytic cleavage which disrupts the DNA-binding part of LexA, leading to derepression of the SOS regulon and eventually DNA repair. This chain is LexA repressor, found in Burkholderia ambifaria (strain ATCC BAA-244 / DSM 16087 / CCUG 44356 / LMG 19182 / AMMD) (Burkholderia cepacia (strain AMMD)).